The following is a 289-amino-acid chain: MKVLVNNHLVEREDATVDIEDRGYQFGDGVYEVVRLYNGKFFTYNEHIDRLYASAAKIDLVIPYSKEELRELLEKLVAENNINTGNVYLQVTRGVQNPRNHVIPDDFPLEGVLTAAAREVPRNERQFVEGGTAITEEDVRWLRCDIKSLNLLGNILAKNKAHQQNALEAILHRGEQVTECSASNVSIIKDGVLWTHAADNLILNGITRQVIIDVAKKNGIPVKEADFTLTDLREADEVFISSTTIEITPITHIDGVQVADGKRGPITAQLHQYFVEEITRACGELVFAK.

A substrate-binding site is contributed by Tyr-31. Arg-50 serves as a coordination point for pyridoxal 5'-phosphate. Positions 99 and 101 each coordinate substrate. Lys-147 is subject to N6-(pyridoxal phosphate)lysine. Glu-179 is a pyridoxal 5'-phosphate binding site.

This sequence belongs to the class-IV pyridoxal-phosphate-dependent aminotransferase family. Homodimer. Pyridoxal 5'-phosphate is required as a cofactor.

The enzyme catalyses D-alanine + 2-oxoglutarate = D-glutamate + pyruvate. Its function is as follows. Acts on the D-isomers of alanine, leucine, aspartate, glutamate, aminobutyrate, norvaline and asparagine. The enzyme transfers an amino group from a substrate D-amino acid to the pyridoxal phosphate cofactor to form pyridoxamine and an alpha-keto acid in the first half-reaction. The second half-reaction is the reverse of the first, transferring the amino group from the pyridoxamine to a second alpha-keto acid to form the product D-amino acid via a ping-pong mechanism. This is an important process in the formation of D-alanine and D-glutamate, which are essential bacterial cell wall components. The sequence is that of D-alanine aminotransferase (dat) from Listeria monocytogenes serovar 1/2a (strain ATCC BAA-679 / EGD-e).